The following is a 286-amino-acid chain: ATP synthase gamma chain (286 aa).

The protein belongs to the ATPase gamma chain family. F-type ATPases have 2 components, CF(1) - the catalytic core - and CF(0) - the membrane proton channel. CF(1) has five subunits: alpha(3), beta(3), gamma(1), delta(1), epsilon(1). CF(0) has three main subunits: a, b and c.

The protein resides in the cell inner membrane. Produces ATP from ADP in the presence of a proton gradient across the membrane. The gamma chain is believed to be important in regulating ATPase activity and the flow of protons through the CF(0) complex. This is ATP synthase gamma chain from Shewanella denitrificans (strain OS217 / ATCC BAA-1090 / DSM 15013).